A 511-amino-acid chain; its full sequence is Putative thymidine phosphorylase (511 aa).

It belongs to the thymidine/pyrimidine-nucleoside phosphorylase family. Type 2 subfamily.

It catalyses the reaction thymidine + phosphate = 2-deoxy-alpha-D-ribose 1-phosphate + thymine. This is Putative thymidine phosphorylase from Bradyrhizobium sp. (strain BTAi1 / ATCC BAA-1182).